A 4299-amino-acid polypeptide reads, in one-letter code: DNA-dependent protein kinase catalytic subunit (4299 aa).

Positions 551–590 (KDLNSTIKKENNNNNNNKNKNNNNNQTLTKEEISKSIKKL) form a coiled coil. Disordered stretches follow at residues 557–577 (IKKENNNNNNNKNKNNNNNQT), 613–633 (DENDNNSNSNSNNNNNNDQDN), 878–917 (NSSDSTSGGDIDIDSGGSMGGGGVVPPPSSSSRHRKMKFK), and 1206–1230 (SSSKNNSNSNSNNNNNNNNNSEDGT). Composition is skewed to low complexity over residues 562–575 (NNNNNNKNKNNNNN), 617–631 (NNSNSNSNNNNNNDQ), 878–893 (NSSDSTSGGDIDIDSG), and 1206–1226 (SSSKNNSNSNSNNNNNNNNNS). Phosphoserine; by autocatalysis is present on Ser2789. 2 positions are modified to phosphothreonine; by autocatalysis: Thr2814 and Thr2822. The span at 2832–2867 (SSSQSYGGTNNNTGSSQLSSSSSSSGSQSSSQNNSS) shows a compositional bias: low complexity. Disordered stretches follow at residues 2832 to 2881 (SSSQ…PKLI) and 3535 to 3559 (TTSSSPSLSISSSSSPYSSTSSSSQ). One can recognise an FAT domain in the interval 3031 to 3707 (KIKDISLNSN…YFPFKISSEQ (677 aa)). The PI3K/PI4K catalytic domain maps to 3887–4226 (FDTNVLVMGS…AKKKLELVNP (340 aa)). The tract at residues 3893 to 3899 (VMGSLRK) is G-loop. The interval 4092–4100 (GIGDRHLEN) is catalytic loop. The tract at residues 4112-4137 (GIDFGHAFGTATQFLPIPELMPFRLT) is activation loop. Positions 4267–4299 (VCSSVKEQIDCLIDQSTDPNILSRAWVGWNGAL) constitute an FATC domain.

The protein belongs to the PI3/PI4-kinase family. DNAPK subfamily. May be phosphorylated upon DNA damage. Could be autophosphorylated. Autophosphorylation induces a conformational change that leads to remodeling of the DNA-PK complex, requisite for efficient end processing and DNA repair. Post-translationally, autophosphorylated on Ser-2789, Thr-2814 and Thr-2822. Ser-2789 is a DNA damage-inducible phosphorylation site (inducible with ionizing radiation, IR).

The protein resides in the nucleus. Its subcellular location is the nucleolus. The enzyme catalyses L-seryl-[protein] + ATP = O-phospho-L-seryl-[protein] + ADP + H(+). It catalyses the reaction L-threonyl-[protein] + ATP = O-phospho-L-threonyl-[protein] + ADP + H(+). Inhibited by wortmannin. Activity of the enzyme seems to be attenuated by autophosphorylation. Its function is as follows. Serine/threonine-protein kinase that acts as a molecular sensor for DNA damage. Is recruited to DNA ends by the Ku70/Ku80 heterodimer and is involved in DNA non-homologous end joining (NHEJ) required for double-strand break (DSB) repair and V(D)J recombination. This activity is only apparent when DNA damage is administered in G1 phase of the cell cycle. Required for efficient signaling of DNA double-stranded breaks via phosphorylation of H2AX during G1. This Dictyostelium discoideum (Social amoeba) protein is DNA-dependent protein kinase catalytic subunit (dnapkcs).